Reading from the N-terminus, the 341-residue chain is Tubulin-specific chaperone C (341 aa).

At Met-1 the chain carries N-acetylmethionine. Basic and acidic residues predominate over residues 34–49 (ERQIEVERRKQKRQDQ). Residues 34 to 55 (ERQIEVERRKQKRQDQEVEEEK) form a disordered region. At Ser-79 the chain carries Phosphoserine. The segment at 148–173 (TAQVDAAPVTSAAPSPPVTKEEEGAP) is disordered. A C-CAP/cofactor C-like domain is found at 163 to 318 (PPVTKEEEGA…NWDQVDDFNW (156 aa)).

The protein belongs to the TBCC family. As to quaternary structure, supercomplex made of cofactors A to E. Cofactors A and D function by capturing and stabilizing tubulin in a quasi-native conformation. Cofactor E binds to the cofactor D-tubulin complex; interaction with cofactor C then causes the release of tubulin polypeptides that are committed to the native state.

The protein localises to the cytoplasm. Functionally, tubulin-folding protein; involved in the final step of the tubulin folding pathway. This chain is Tubulin-specific chaperone C (Tbcc), found in Mus musculus (Mouse).